The following is a 611-amino-acid chain: Dihydroxy-acid dehydratase (611 aa).

Asp-81 contacts Mg(2+). A [2Fe-2S] cluster-binding site is contributed by Cys-122. Mg(2+)-binding residues include Asp-123 and Lys-124. Lys-124 is subject to N6-carboxylysine. Cys-195 is a binding site for [2Fe-2S] cluster. Glu-491 contacts Mg(2+). Ser-517 serves as the catalytic Proton acceptor.

It belongs to the IlvD/Edd family. As to quaternary structure, homodimer. Requires [2Fe-2S] cluster as cofactor. Mg(2+) is required as a cofactor.

It catalyses the reaction (2R)-2,3-dihydroxy-3-methylbutanoate = 3-methyl-2-oxobutanoate + H2O. The catalysed reaction is (2R,3R)-2,3-dihydroxy-3-methylpentanoate = (S)-3-methyl-2-oxopentanoate + H2O. It functions in the pathway amino-acid biosynthesis; L-isoleucine biosynthesis; L-isoleucine from 2-oxobutanoate: step 3/4. It participates in amino-acid biosynthesis; L-valine biosynthesis; L-valine from pyruvate: step 3/4. Functionally, functions in the biosynthesis of branched-chain amino acids. Catalyzes the dehydration of (2R,3R)-2,3-dihydroxy-3-methylpentanoate (2,3-dihydroxy-3-methylvalerate) into 2-oxo-3-methylpentanoate (2-oxo-3-methylvalerate) and of (2R)-2,3-dihydroxy-3-methylbutanoate (2,3-dihydroxyisovalerate) into 2-oxo-3-methylbutanoate (2-oxoisovalerate), the penultimate precursor to L-isoleucine and L-valine, respectively. This is Dihydroxy-acid dehydratase from Brucella abortus (strain S19).